Here is a 243-residue protein sequence, read N- to C-terminus: 35 kDa gas vesicle protein (243 aa).

It belongs to the gas vesicle GvpC family.

The protein resides in the gas vesicle shell. May confer stability to the gas vesicle shells. Gas vesicles are small, hollow, gas filled protein structures that are found in several microbial planktonic microorganisms. They allow the positioning of the organism at the favorable depth for growth. The chain is 35 kDa gas vesicle protein from Dactylococcopsis salina (strain PCC 8305) (Myxobactron salinum).